The primary structure comprises 140 residues: Low calcium response locus protein T (140 aa).

The sequence is that of Low calcium response locus protein T (lcrT) from Yersinia pestis.